Consider the following 319-residue polypeptide: Acetyl-coenzyme A carboxylase carboxyl transferase subunit alpha (319 aa).

A CoA carboxyltransferase C-terminal domain is found at 43–296 (LKQKSVELTQ…KTQLLLDLVE (254 aa)).

The protein belongs to the AccA family. In terms of assembly, acetyl-CoA carboxylase is a heterohexamer composed of biotin carboxyl carrier protein (AccB), biotin carboxylase (AccC) and two subunits each of ACCase subunit alpha (AccA) and ACCase subunit beta (AccD).

It is found in the cytoplasm. The catalysed reaction is N(6)-carboxybiotinyl-L-lysyl-[protein] + acetyl-CoA = N(6)-biotinyl-L-lysyl-[protein] + malonyl-CoA. It participates in lipid metabolism; malonyl-CoA biosynthesis; malonyl-CoA from acetyl-CoA: step 1/1. Its function is as follows. Component of the acetyl coenzyme A carboxylase (ACC) complex. First, biotin carboxylase catalyzes the carboxylation of biotin on its carrier protein (BCCP) and then the CO(2) group is transferred by the carboxyltransferase to acetyl-CoA to form malonyl-CoA. The chain is Acetyl-coenzyme A carboxylase carboxyl transferase subunit alpha from Blochmanniella floridana.